The following is a 491-amino-acid chain: Cysteine--tRNA ligase (491 aa).

Cys29 serves as a coordination point for Zn(2+). The short motif at Pro31 to Asn41 is the 'HIGH' region element. Residues Cys227, His252, and Glu256 each coordinate Zn(2+). The short motif at Lys285 to Ser289 is the 'KMSKS' region element. Lys288 is a binding site for ATP.

Belongs to the class-I aminoacyl-tRNA synthetase family. As to quaternary structure, monomer. The cofactor is Zn(2+).

Its subcellular location is the cytoplasm. The catalysed reaction is tRNA(Cys) + L-cysteine + ATP = L-cysteinyl-tRNA(Cys) + AMP + diphosphate. This Rhodopseudomonas palustris (strain TIE-1) protein is Cysteine--tRNA ligase.